The sequence spans 388 residues: Alanine racemase 3 (388 aa).

Residue K41 is the Proton acceptor; specific for D-alanine of the active site. K41 bears the N6-(pyridoxal phosphate)lysine mark. R135 contributes to the substrate binding site. Catalysis depends on Y256, which acts as the Proton acceptor; specific for L-alanine. Substrate is bound at residue M304.

Belongs to the alanine racemase family. It depends on pyridoxal 5'-phosphate as a cofactor.

It carries out the reaction L-alanine = D-alanine. It functions in the pathway amino-acid biosynthesis; D-alanine biosynthesis; D-alanine from L-alanine: step 1/1. In terms of biological role, catalyzes the interconversion of L-alanine and D-alanine. May also act on other amino acids. This Mesorhizobium japonicum (strain LMG 29417 / CECT 9101 / MAFF 303099) (Mesorhizobium loti (strain MAFF 303099)) protein is Alanine racemase 3 (alr3).